The following is a 250-amino-acid chain: Ubiquinone/menaquinone biosynthesis C-methyltransferase UbiE (250 aa).

Residues S73, D94, and 122–123 (NA) each bind S-adenosyl-L-methionine.

The protein belongs to the class I-like SAM-binding methyltransferase superfamily. MenG/UbiE family.

It catalyses the reaction a 2-demethylmenaquinol + S-adenosyl-L-methionine = a menaquinol + S-adenosyl-L-homocysteine + H(+). The enzyme catalyses a 2-methoxy-6-(all-trans-polyprenyl)benzene-1,4-diol + S-adenosyl-L-methionine = a 5-methoxy-2-methyl-3-(all-trans-polyprenyl)benzene-1,4-diol + S-adenosyl-L-homocysteine + H(+). It participates in quinol/quinone metabolism; menaquinone biosynthesis; menaquinol from 1,4-dihydroxy-2-naphthoate: step 2/2. Its pathway is cofactor biosynthesis; ubiquinone biosynthesis. Its function is as follows. Methyltransferase required for the conversion of demethylmenaquinol (DMKH2) to menaquinol (MKH2) and the conversion of 2-polyprenyl-6-methoxy-1,4-benzoquinol (DDMQH2) to 2-polyprenyl-3-methyl-6-methoxy-1,4-benzoquinol (DMQH2). This is Ubiquinone/menaquinone biosynthesis C-methyltransferase UbiE from Legionella pneumophila (strain Lens).